The following is a 35-amino-acid chain: 30 kDa neutral phosphatase (35 aa).

Over residues Lys-1 to Ile-28 the composition is skewed to polar residues. Residues Lys-1 to Gln-35 are disordered.

In terms of biological role, highly cationic enzyme that can bind human or rat immunoglobulins as well as serum albumin, and could therefore be involved in post-infectious sequelae. This chain is 30 kDa neutral phosphatase, found in Staphylococcus aureus.